The sequence spans 423 residues: UDP-N-acetylglucosamine 1-carboxyvinyltransferase (423 aa).

A phosphoenolpyruvate-binding site is contributed by 22 to 23; it reads KN. Residue Arg93 coordinates UDP-N-acetyl-alpha-D-glucosamine. Residue Cys117 is the Proton donor of the active site. The residue at position 117 (Cys117) is a 2-(S-cysteinyl)pyruvic acid O-phosphothioketal. UDP-N-acetyl-alpha-D-glucosamine contacts are provided by Asp305 and Ile327.

Belongs to the EPSP synthase family. MurA subfamily.

The protein localises to the cytoplasm. It carries out the reaction phosphoenolpyruvate + UDP-N-acetyl-alpha-D-glucosamine = UDP-N-acetyl-3-O-(1-carboxyvinyl)-alpha-D-glucosamine + phosphate. It participates in cell wall biogenesis; peptidoglycan biosynthesis. In terms of biological role, cell wall formation. Adds enolpyruvyl to UDP-N-acetylglucosamine. This Acidithiobacillus ferrooxidans (strain ATCC 23270 / DSM 14882 / CIP 104768 / NCIMB 8455) (Ferrobacillus ferrooxidans (strain ATCC 23270)) protein is UDP-N-acetylglucosamine 1-carboxyvinyltransferase.